Consider the following 77-residue polypeptide: U9-lycotoxin-Ls1a (77 aa).

Residues 1-20 form the signal peptide; the sequence is MKLLLFTALVLVVIVSLIEA. A propeptide spanning residues 21-26 is cleaved from the precursor; it reads EAENER.

It belongs to the neurotoxin 19 (CSTX) family. 08 (U8-Lctx) subfamily. In terms of processing, contains 4 disulfide bonds. Expressed by the venom gland.

The protein localises to the secreted. The protein is U9-lycotoxin-Ls1a of Lycosa singoriensis (Wolf spider).